We begin with the raw amino-acid sequence, 269 residues long: Trans-aconitate 2-methyltransferase (269 aa).

Belongs to the methyltransferase superfamily. Tam family.

The protein localises to the cytoplasm. It carries out the reaction trans-aconitate + S-adenosyl-L-methionine = (E)-3-(methoxycarbonyl)pent-2-enedioate + S-adenosyl-L-homocysteine. Its function is as follows. Catalyzes the S-adenosylmethionine monomethyl esterification of trans-aconitate. This chain is Trans-aconitate 2-methyltransferase, found in Streptomyces avermitilis (strain ATCC 31267 / DSM 46492 / JCM 5070 / NBRC 14893 / NCIMB 12804 / NRRL 8165 / MA-4680).